Here is a 117-residue protein sequence, read N- to C-terminus: Large ribosomal subunit protein uL18 (117 aa).

This sequence belongs to the universal ribosomal protein uL18 family. Part of the 50S ribosomal subunit; part of the 5S rRNA/L5/L18/L25 subcomplex. Contacts the 5S and 23S rRNAs.

Functionally, this is one of the proteins that bind and probably mediate the attachment of the 5S RNA into the large ribosomal subunit, where it forms part of the central protuberance. This chain is Large ribosomal subunit protein uL18, found in Sodalis glossinidius (strain morsitans).